The chain runs to 62 residues: Sec-independent protein translocase protein TatA (62 aa).

A helical transmembrane segment spans residues 10–32 (LLIILIIVIAIFGAGKLAGLGGA).

This sequence belongs to the TatA/E family. As to quaternary structure, forms a complex with TatC.

The protein resides in the cell membrane. Part of the twin-arginine translocation (Tat) system that transports large folded proteins containing a characteristic twin-arginine motif in their signal peptide across membranes. TatA could form the protein-conducting channel of the Tat system. The protein is Sec-independent protein translocase protein TatA of Chloroflexus aurantiacus (strain ATCC 29366 / DSM 635 / J-10-fl).